Reading from the N-terminus, the 173-residue chain is Peptide deformylase (173 aa).

C94 and H136 together coordinate Fe cation. E137 is an active-site residue. Fe cation is bound at residue H140.

It belongs to the polypeptide deformylase family. The cofactor is Fe(2+).

It catalyses the reaction N-terminal N-formyl-L-methionyl-[peptide] + H2O = N-terminal L-methionyl-[peptide] + formate. In terms of biological role, removes the formyl group from the N-terminal Met of newly synthesized proteins. Requires at least a dipeptide for an efficient rate of reaction. N-terminal L-methionine is a prerequisite for activity but the enzyme has broad specificity at other positions. In Desulfosudis oleivorans (strain DSM 6200 / JCM 39069 / Hxd3) (Desulfococcus oleovorans), this protein is Peptide deformylase.